Consider the following 239-residue polypeptide: Ribosomal RNA small subunit methyltransferase G (239 aa).

S-adenosyl-L-methionine is bound by residues Gly-78, Phe-83, 129–130 (AE), and Arg-148.

Belongs to the methyltransferase superfamily. RNA methyltransferase RsmG family.

The protein localises to the cytoplasm. Specifically methylates the N7 position of a guanine in 16S rRNA. The polypeptide is Ribosomal RNA small subunit methyltransferase G (Clostridium botulinum (strain Okra / Type B1)).